Here is a 468-residue protein sequence, read N- to C-terminus: Argininosuccinate synthase (468 aa).

ATP is bound by residues 10-18 (AYSGGLDTS) and Ala37. Residues Tyr90 and Ser95 each coordinate L-citrulline. Position 120 (Gly120) interacts with ATP. 3 residues coordinate L-aspartate: Thr122, Asn126, and Asp127. Asn126 is an L-citrulline binding site. Arg130, Ser182, Ser191, Glu267, and Tyr279 together coordinate L-citrulline. Residues 445-457 (PVAAKATAKPVKA) are compositionally biased toward low complexity. A disordered region spans residues 445–468 (PVAAKATAKPVKAPVKKPIAKKKG). Residues 458-468 (PVKKPIAKKKG) are compositionally biased toward basic residues.

It belongs to the argininosuccinate synthase family. Type 1 subfamily. As to quaternary structure, homotetramer.

It is found in the cytoplasm. It catalyses the reaction L-citrulline + L-aspartate + ATP = 2-(N(omega)-L-arginino)succinate + AMP + diphosphate + H(+). It functions in the pathway amino-acid biosynthesis; L-arginine biosynthesis; L-arginine from L-ornithine and carbamoyl phosphate: step 2/3. This chain is Argininosuccinate synthase, found in Dechloromonas aromatica (strain RCB).